The primary structure comprises 120 residues: Large ribosomal subunit protein uL22 (120 aa).

Positions 1–22 (MLVNRRYTAKGKNLPSSPKKVR) are disordered.

The protein belongs to the universal ribosomal protein uL22 family. Part of the 50S ribosomal subunit.

Its function is as follows. This protein binds specifically to 23S rRNA; its binding is stimulated by other ribosomal proteins, e.g. L4, L17, and L20. It is important during the early stages of 50S assembly. It makes multiple contacts with different domains of the 23S rRNA in the assembled 50S subunit and ribosome. Functionally, the globular domain of the protein is located near the polypeptide exit tunnel on the outside of the subunit, while an extended beta-hairpin is found that lines the wall of the exit tunnel in the center of the 70S ribosome. The polypeptide is Large ribosomal subunit protein uL22 (Borreliella burgdorferi (strain ATCC 35210 / DSM 4680 / CIP 102532 / B31) (Borrelia burgdorferi)).